A 136-amino-acid chain; its full sequence is NADH-ubiquinone oxidoreductase chain 3 (136 aa).

The next 3 membrane-spanning stretches (helical) occupy residues 5-25 (TFFL…NLIF), 55-75 (ISFF…LLVY), and 85-105 (GIYG…GFAF).

This sequence belongs to the complex I subunit 3 family.

The protein localises to the mitochondrion membrane. The enzyme catalyses a ubiquinone + NADH + 5 H(+)(in) = a ubiquinol + NAD(+) + 4 H(+)(out). Its function is as follows. Core subunit of the mitochondrial membrane respiratory chain NADH dehydrogenase (Complex I) that is believed to belong to the minimal assembly required for catalysis. Complex I functions in the transfer of electrons from NADH to the respiratory chain. The immediate electron acceptor for the enzyme is believed to be ubiquinone. This is NADH-ubiquinone oxidoreductase chain 3 (nd3) from Emericella nidulans (Aspergillus nidulans).